The chain runs to 423 residues: CinA-like protein (423 aa).

The protein belongs to the CinA family.

The chain is CinA-like protein from Chlorobium phaeobacteroides (strain DSM 266 / SMG 266 / 2430).